Reading from the N-terminus, the 490-residue chain is ATP synthase subunit beta, chloroplastic (490 aa).

Residue 170–177 participates in ATP binding; the sequence is GGAGVGKT.

The protein belongs to the ATPase alpha/beta chains family. As to quaternary structure, F-type ATPases have 2 components, CF(1) - the catalytic core - and CF(0) - the membrane proton channel. CF(1) has five subunits: alpha(3), beta(3), gamma(1), delta(1), epsilon(1). CF(0) has four main subunits: a(1), b(1), b'(1) and c(9-12).

It is found in the plastid. It localises to the chloroplast thylakoid membrane. The catalysed reaction is ATP + H2O + 4 H(+)(in) = ADP + phosphate + 5 H(+)(out). Produces ATP from ADP in the presence of a proton gradient across the membrane. The catalytic sites are hosted primarily by the beta subunits. In Convolvulus arvensis (Field bindweed), this protein is ATP synthase subunit beta, chloroplastic.